The chain runs to 441 residues: Chromatin structure-remodeling complex subunit SFH1 (441 aa).

Residues 124 to 137 (DFDANDFEDDDDDD) show a composition bias toward acidic residues. 2 disordered regions span residues 124-183 (DFDA…AAPP) and 383-407 (EMTP…KRES). Basic and acidic residues-rich tracts occupy residues 138-147 (QSQRESRDGS) and 155-166 (DGTKKEEQDKFA).

This sequence belongs to the SNF5 family.

The protein resides in the nucleus. Part of the chromatin structure-remodeling complex (RSC) which is involved in transcription regulation and nucleosome positioning. RSC is responsible for the transfer of a histone octamer from a nucleosome core particle to naked DNA. The reaction requires ATP and involves an activated RSC-nucleosome intermediate. Remodeling reaction also involves DNA translocation, DNA twist and conformational change. As a reconfigurer of centromeric and flanking nucleosomes, RSC complex is required both for proper kinetochore function in chromosome segregation and, via a PKC1-dependent signaling pathway, for organization of the cellular cytoskeleton. This subunit is essential for mitotic growth and required for cell cycle progression. This Yarrowia lipolytica (strain CLIB 122 / E 150) (Yeast) protein is Chromatin structure-remodeling complex subunit SFH1 (SFH1).